Here is a 308-residue protein sequence, read N- to C-terminus: Atrochrysone carboxyl ACP thioesterase (308 aa).

Residues His99, His101, Asp103, and His104 each contribute to the Zn(2+) site. Residue Asp103 is the Proton donor/acceptor of the active site.

The protein belongs to the metallo-beta-lactamase superfamily. The cofactor is Zn(2+).

It carries out the reaction atrochrysone carboxyl-[ACP] + H2O = atrochrysone carboxylate + holo-[ACP] + H(+). The protein operates within secondary metabolite biosynthesis. Atrochrysone carboxyl ACP thioesterase; part of the gene cluster that mediates the biosynthesis of physcion, a natural anthraquinone fungicide that can prevent plant fungal infections. The pathway begins with the polyketide synthase AcPKS that condenses 8 malonyl-CoA units to synthesize atrochrysone thioester which is released from the synthase by the atrochrysone carboxyl ACP thioesterase AcTE that breaks the thioester bond and leads to free atrochrysone carboxylic acid. Spontaneous decarboxylation of atrochrysone carboxylic acid leads to the formation of atrochrysone. Then, atrochrysone undergoes spontaneous dehydration and oxidation, giving the products emodin anthrone and emodin. The O-methyltransferase AcOMT then methylates the C-6 hydroxyl of emodin to form physcion. In Aspergillus chevalieri (Eurotium chevalieri), this protein is Atrochrysone carboxyl ACP thioesterase.